A 308-amino-acid chain; its full sequence is Very-long-chain enoyl-CoA reductase (308 aa).

The Cytoplasmic portion of the chain corresponds to 1 to 86 (MKHYEVEILD…YFRDLGAQIS (86 aa)). Lys22 bears the N6-acetyllysine mark. At Ser58 the chain carries Phosphoserine. Lys60 carries the N6-acetyllysine modification. The helical transmembrane segment at 87-106 (WVTVFLTEYAGPLFIYLLFY) threads the bilayer. Over 107–124 (FRVPFIYGRKYDFTSSRH) the chain is Lumenal. Residues 125–147 (TVVHLACICHSFHYIKRLLETLF) traverse the membrane as a helical segment. Residues 148–158 (VHRFSHGTMPL) lie on the Cytoplasmic side of the membrane. A helical transmembrane segment spans residues 159–180 (RNIFKNCTYYWGFAAWMAYYIN). At 181-189 (HPLYTPPTY) the chain is on the lumenal side. Residues 190–216 (GAQQVKLALAIFVICQLGNFSIHMALR) traverse the membrane as a helical segment. Over 217–245 (DLRPAGSKTRKIPYPTRNPFTWLFLLVSC) the chain is Cytoplasmic. Residues 246–262 (PNYTYEVGSWIGFAIMT) traverse the membrane as a helical segment. At 263–264 (QC) the chain is on the lumenal side. Residues 265–292 (LPVALFSLVGFTQMTIWAKGKHRSYLKE) form a helical membrane-spanning segment. Residues 293 to 308 (FRDYPPLRMPIIPFLL) are Cytoplasmic-facing.

It belongs to the steroid 5-alpha reductase family. As to quaternary structure, interacts with ELOVL1 and LASS2. In terms of processing, glycosylated.

It localises to the endoplasmic reticulum membrane. The catalysed reaction is a very-long-chain 2,3-saturated fatty acyl-CoA + NADP(+) = a very-long-chain (2E)-enoyl-CoA + NADPH + H(+). It carries out the reaction octadecanoyl-CoA + NADP(+) = (2E)-octadecenoyl-CoA + NADPH + H(+). It catalyses the reaction (2E,7Z,10Z,13Z,16Z)-docosapentaenoyl-CoA + NADPH + H(+) = (7Z,10Z,13Z,16Z)-docosatetraenoyl-CoA + NADP(+). The enzyme catalyses (2E,7Z,10Z,13Z,16Z,19Z)-docosahexaenoyl-CoA + NADPH + H(+) = (7Z,10Z,13Z,16Z,19Z)-docosapentaenoyl-CoA + NADP(+). The catalysed reaction is (2E,8Z,11Z,14Z)-eicosatetraenoyl-CoA + NADPH + H(+) = (8Z,11Z,14Z)-eicosatrienoyl-CoA + NADP(+). It carries out the reaction (2E)-hexadecenoyl-CoA + NADPH + H(+) = hexadecanoyl-CoA + NADP(+). It functions in the pathway lipid metabolism; fatty acid biosynthesis. The protein operates within lipid metabolism; sphingolipid metabolism. Involved in both the production of very long-chain fatty acids for sphingolipid synthesis and the degradation of the sphingosine moiety in sphingolipids through the sphingosine 1-phosphate metabolic pathway. Catalyzes the last of the four reactions of the long-chain fatty acids elongation cycle. This endoplasmic reticulum-bound enzymatic process, allows the addition of 2 carbons to the chain of long- and very long-chain fatty acids/VLCFAs per cycle. This enzyme reduces the trans-2,3-enoyl-CoA fatty acid intermediate to an acyl-CoA that can be further elongated by entering a new cycle of elongation. Thereby, it participates in the production of VLCFAs of different chain lengths that are involved in multiple biological processes as precursors of membrane lipids and lipid mediators. Catalyzes the saturation step of the sphingosine 1-phosphate metabolic pathway, the conversion of trans-2-hexadecenoyl-CoA to palmitoyl-CoA. This chain is Very-long-chain enoyl-CoA reductase (TECR), found in Bos taurus (Bovine).